The sequence spans 272 residues: Exosome complex component Rrp42 (272 aa).

The protein belongs to the RNase PH family. Rrp42 subfamily. As to quaternary structure, component of the archaeal exosome complex. Forms a hexameric ring-like arrangement composed of 3 Rrp41-Rrp42 heterodimers. The hexameric ring associates with a trimer of Rrp4 and/or Csl4 subunits.

The protein resides in the cytoplasm. Non-catalytic component of the exosome, which is a complex involved in RNA degradation. Contributes to the structuring of the Rrp41 active site. This is Exosome complex component Rrp42 from Thermococcus kodakarensis (strain ATCC BAA-918 / JCM 12380 / KOD1) (Pyrococcus kodakaraensis (strain KOD1)).